Reading from the N-terminus, the 309-residue chain is Aspartate carbamoyltransferase catalytic subunit (309 aa).

Carbamoyl phosphate contacts are provided by Arg58 and Thr59. Residue Lys86 participates in L-aspartate binding. Carbamoyl phosphate is bound by residues Arg108, His136, and Gln139. Residues Arg170 and Arg224 each contribute to the L-aspartate site. The carbamoyl phosphate site is built by Gly266 and Pro267.

This sequence belongs to the aspartate/ornithine carbamoyltransferase superfamily. ATCase family. In terms of assembly, heterododecamer (2C3:3R2) of six catalytic PyrB chains organized as two trimers (C3), and six regulatory PyrI chains organized as three dimers (R2).

It catalyses the reaction carbamoyl phosphate + L-aspartate = N-carbamoyl-L-aspartate + phosphate + H(+). It functions in the pathway pyrimidine metabolism; UMP biosynthesis via de novo pathway; (S)-dihydroorotate from bicarbonate: step 2/3. Functionally, catalyzes the condensation of carbamoyl phosphate and aspartate to form carbamoyl aspartate and inorganic phosphate, the committed step in the de novo pyrimidine nucleotide biosynthesis pathway. The polypeptide is Aspartate carbamoyltransferase catalytic subunit (Campylobacter concisus (strain 13826)).